Consider the following 300-residue polypeptide: Ribosomal protein bS6--L-glutamate ligase (300 aa).

One can recognise an ATP-grasp domain in the interval 104–287 (MQLLARQGID…IAGKMIRWIE (184 aa)). ATP is bound by residues lysine 141, 178 to 179 (EY), aspartate 187, and 211 to 213 (RSN). Aspartate 248, glutamate 260, and asparagine 262 together coordinate Mg(2+). Positions 248, 260, and 262 each coordinate Mn(2+).

The protein belongs to the RimK family. Requires Mg(2+) as cofactor. Mn(2+) is required as a cofactor.

An L-glutamate ligase that catalyzes the ATP-dependent post-translational addition of glutamate residues to the C-terminus of ribosomal protein bS6 (RpsF). Is also able to catalyze the synthesis of poly-alpha-glutamate in vitro, via ATP hydrolysis from unprotected glutamate as substrate. The number of glutamate residues added to either RpsF or to poly-alpha-glutamate changes with pH. The sequence is that of Ribosomal protein bS6--L-glutamate ligase from Escherichia coli O7:K1 (strain IAI39 / ExPEC).